We begin with the raw amino-acid sequence, 215 residues long: Orotate phosphoribosyltransferase (215 aa).

Lys25 contributes to the 5-phospho-alpha-D-ribose 1-diphosphate binding site. Residue 33–34 participates in orotate binding; it reads FF. Residues 71-72, Arg98, Lys99, Lys102, His104, and 124-132 each bind 5-phospho-alpha-D-ribose 1-diphosphate; these read YK and DDVITAGTA. The orotate site is built by Thr128 and Arg156.

The protein belongs to the purine/pyrimidine phosphoribosyltransferase family. PyrE subfamily. As to quaternary structure, homodimer.

The catalysed reaction is orotidine 5'-phosphate + diphosphate = orotate + 5-phospho-alpha-D-ribose 1-diphosphate. The protein operates within pyrimidine metabolism; UMP biosynthesis via de novo pathway; UMP from orotate: step 1/2. Its function is as follows. Catalyzes the transfer of a ribosyl phosphate group from 5-phosphoribose 1-diphosphate to orotate, leading to the formation of orotidine monophosphate (OMP). This chain is Orotate phosphoribosyltransferase (ura5), found in Schizosaccharomyces pombe (strain 972 / ATCC 24843) (Fission yeast).